A 542-amino-acid polypeptide reads, in one-letter code: Formate--tetrahydrofolate ligase (542 aa).

53-60 (TPAGEGKT) serves as a coordination point for ATP.

This sequence belongs to the formate--tetrahydrofolate ligase family.

It catalyses the reaction (6S)-5,6,7,8-tetrahydrofolate + formate + ATP = (6R)-10-formyltetrahydrofolate + ADP + phosphate. Its pathway is one-carbon metabolism; tetrahydrofolate interconversion. In Thermotoga maritima (strain ATCC 43589 / DSM 3109 / JCM 10099 / NBRC 100826 / MSB8), this protein is Formate--tetrahydrofolate ligase.